We begin with the raw amino-acid sequence, 383 residues long: 8-amino-7-oxononanoate synthase (383 aa).

Residue Arg-21 coordinates substrate. 108 to 109 (GF) provides a ligand contact to pyridoxal 5'-phosphate. His-133 contributes to the substrate binding site. Pyridoxal 5'-phosphate-binding residues include Ser-179, His-207, and Thr-233. Lys-236 is subject to N6-(pyridoxal phosphate)lysine. Thr-350 contacts substrate.

The protein belongs to the class-II pyridoxal-phosphate-dependent aminotransferase family. BioF subfamily. In terms of assembly, homodimer. Pyridoxal 5'-phosphate is required as a cofactor.

The enzyme catalyses 6-carboxyhexanoyl-[ACP] + L-alanine + H(+) = (8S)-8-amino-7-oxononanoate + holo-[ACP] + CO2. It functions in the pathway cofactor biosynthesis; biotin biosynthesis. In terms of biological role, catalyzes the decarboxylative condensation of pimeloyl-[acyl-carrier protein] and L-alanine to produce 8-amino-7-oxononanoate (AON), [acyl-carrier protein], and carbon dioxide. This is 8-amino-7-oxononanoate synthase from Cronobacter sakazakii (strain ATCC BAA-894) (Enterobacter sakazakii).